Here is a 1800-residue protein sequence, read N- to C-terminus: MASSLAAQLSQIAAKSTNQLNLKAQRIAHSQSLIFDWKTATTQDFDTVYQICFEGFQELCQLDPRFAPFERTIFSEQSKAEDRTEMNAAQNKELDTVVEAFLALVGGHLLLSPAVKAVDWLIRRFRVHEYNTEFTILTFLPYYTTPLFLNLLSILPEDLTPTFKILNPYKKSQINPPRHPLVHSATTNKHFLAAVNRYTLQVSKQRAHHHALLSFWAGTLTEAVAGMLDSSRSGRREVEKEKHEDVVMKVLPVLNDGLALKDVSELVIGCYMVCVVLAQKSSLQDKLLDGLMEAVAGSWTDETKESGLICLSVLAQKKSDARIPKRAFKAVLRLEDPVQQLSAISAQYPTSHLLLGLVAGCVDDLSKQKDLSRLDLLSLLFETNLLGEQEAGKAMAVILQAVSHAHTEGVLSLDAQTHLAELVQHFTQSESLQPIFQKTIEDSSIDVAALEHNLQTVIESVPTTTPAIGDVEMEDVQQEAVEDNFASVLESVAGKNLESSALSAQSMPAYESLVQTFALAVGSQEKLQAFVDLPALKKADASTSPQYLSFFIRTFSGSYPIGTRITALNQISSLLNSATPDVDLQALLPFLLVALADSSERVRREAAGVLAAIGSLYKKSKKGDANVWARDTIYGKQSKNVQWIAGRDVQKIVERAFLPGLEEYVLDQAHIGRVLEATLRGSSTSDSGATELKKPLRLSLFTFLCSHAVQMPLYAPKLSLLKLLNRVDKAGGTTRTKELGPFLKTWRDMKEHTAKDVCERERVSVADVDREAVMTVTPKDKDAISLLLSNVSPYSDSLRPSFVTAIFNRMKAVWGTVAEELQVDAAEKLFEISLEDVQTPLVHGCRDVLRSVQLTGSVLLQFLRKIPVSITDMESLGPAPKRRRTSQNNMVAMTIKDEAKLSQLMEKMTFILELVDSSTPEAHPELADGLFQTLAALHHFKSQIQSGLSYLLSLTLGSLLAIVNRSKGTAKAQFDTSVIRADLVVDCVRTTDSPQVQNAALLLVAGLSVIAPELVLHSVMPIFTFMGSSVLRKDDEYSVSVIDQTIDQVVPALIQSLRNQKRDVVSGTSELLLSFTAAFEHIPSHRRLRLFHALVTKLGTQDFLFAVLAMLANRYALDKDVLILMTGLVSDASAPVELNTYSKFLDLVKDSLSSKPGISQVLLGIGSDDGRDPQKVAVDLLRALAYLFKHSSLKVKMAKDFATEGDKVVGQIRTLFSRILEQVLAIGESMQNVKPVSQASGDVLSALFGTLSLVDFLDTIEVLLQRRNDELRRKVLRLLEGRLRQNPERDGASQHRMLDFLPTLVNIIQSSPDILLKHAAVACIDRIAEKYGRKEPTKVIHAAQVVASEACIGQDDERIRIMGVLCLASMAEVLGEAMIPALPDALSRSLALLEQSLEDGKENARLHDAVYSFFSALFIHIPFMVSGSHLDKILVLSYKSAVSEGVEDESREEALQLMARKVDVAATYAAIDRNWQHAVKAGPDATRETLGVVSLAIEKHPKSATVKNIAVLTSILFKAFDLRREQVSLDTQATFELSDVDEIEDIINEVTIKMIYKLNDTTFRPIFTKLLEWATTGVPKKDARGSLARLTTFYRFLQVFFGTLQSIVTGYSSYIIENVVSVLGKANPSNQDTKSLWLATMRMLKNSFEHDQDEFWQSPSHLTVIAQPLISQLAHAKNSSTASIVIAEAVPALTELAVAADSTDNHKELNTVLMRLLRPSAGPSGKTAGGENPHTRLAALKAQQSLTEQLGEEWLALLPEMLPYISELMEDEDENVEREVRKWVKQIEDVLGERLDDMLT.

2 HEAT repeats span residues 426–467 and 581–619; these read FTQS…TTPA and DVDL…LYKK. 2 helical membrane passes run 944-964 and 1000-1020; these read IQSG…AIVN and ALLL…HSVM. 4 HEAT repeats span residues 1043-1081, 1250-1288, 1294-1333, and 1755-1793; these read DQTI…AFEH, TLSL…QNPE, QHRM…KYGR, and LALL…VLGE.

Belongs to the HEATR1/UTP10 family. As to quaternary structure, component of the ribosomal small subunit (SSU) processome.

The protein resides in the nucleus. It localises to the nucleolus. The protein localises to the membrane. Involved in nucleolar processing of pre-18S ribosomal RNA. Involved in ribosome biosynthesis. The chain is U3 small nucleolar RNA-associated protein 10 from Aspergillus niger (strain ATCC MYA-4892 / CBS 513.88 / FGSC A1513).